Consider the following 360-residue polypeptide: Coiled-coil domain-containing protein 86 (360 aa).

Residues 1 to 12 (MDTPLRRSRRLG) show a composition bias toward basic residues. Disordered regions lie at residues 1-314 (MDTP…ENER) and 328-360 (LKRA…AAKI). Ser21, Ser24, Ser47, Ser50, and Ser58 each carry phosphoserine. Thr65 carries the post-translational modification Phosphothreonine. Phosphoserine is present on residues Ser66, Ser69, Ser80, Ser91, Ser102, Ser110, Ser113, and Ser128. The span at 66–83 (SPGSPRLQQGSGLESPQG) shows a compositional bias: polar residues. A compositionally biased stretch (pro residues) spans 153–164 (QLPPVPGSPEPY). Phosphoserine is present on residues Ser188, Ser217, and Ser218. Residues 238–254 (GKPKSGRVWKDRSKKRF) show a composition bias toward basic residues. A coiled-coil region spans residues 272–323 (KERQERKLAKDFARHLEEEKERRRQEKKQRRAENLKRRLENERKAEVVQVIR). Basic and acidic residues-rich tracts occupy residues 273-295 (ERQE…ERRR) and 302-314 (RAEN…ENER). Arg342 carries the post-translational modification Citrulline.

In terms of processing, citrullinated by PADI4.

It is found in the nucleus. Its subcellular location is the chromosome. It localises to the nucleolus. Functionally, required for proper chromosome segregation during mitosis and error-free mitotic progression. This chain is Coiled-coil domain-containing protein 86, found in Pongo abelii (Sumatran orangutan).